The following is a 264-amino-acid chain: ATP synthase subunit a (264 aa).

The next 7 helical transmembrane spans lie at Ile-41 to Leu-61, Ile-99 to Met-119, His-129 to Phe-149, Phe-156 to Ile-176, Ala-194 to Met-214, Gly-217 to Leu-237, and Glu-238 to Lys-258.

This sequence belongs to the ATPase A chain family. In terms of assembly, F-type ATPases have 2 components, CF(1) - the catalytic core - and CF(0) - the membrane proton channel. CF(1) has five subunits: alpha(3), beta(3), gamma(1), delta(1), epsilon(1). CF(0) has three main subunits: a, b and c.

The protein localises to the mitochondrion inner membrane. Functionally, mitochondrial membrane ATP synthase (F(1)F(0) ATP synthase or Complex V) produces ATP from ADP in the presence of a proton gradient across the membrane which is generated by electron transport complexes of the respiratory chain. F-type ATPases consist of two structural domains, F(1) - containing the extramembraneous catalytic core and F(0) - containing the membrane proton channel, linked together by a central stalk and a peripheral stalk. During catalysis, ATP synthesis in the catalytic domain of F(1) is coupled via a rotary mechanism of the central stalk subunits to proton translocation. Key component of the proton channel; it may play a direct role in the translocation of protons across the membrane. In Podospora anserina (strain S / ATCC MYA-4624 / DSM 980 / FGSC 10383) (Pleurage anserina), this protein is ATP synthase subunit a (ATP6).